An 84-amino-acid chain; its full sequence is Large ribosomal subunit protein bL27 (84 aa).

A disordered region spans residues 1 to 22 (MAHKKAGGSTRNGRDSESKRLG).

This sequence belongs to the bacterial ribosomal protein bL27 family.

The chain is Large ribosomal subunit protein bL27 from Shewanella sp. (strain MR-4).